Reading from the N-terminus, the 344-residue chain is Meiotic recombination protein DMC1 homolog A (344 aa).

G133 to T140 contacts ATP. Position 235 (R235) interacts with dsDNA. SsDNA is bound by residues R235, F238, R241, R247, and R315. DsDNA contacts are provided by R241 and R247.

The protein belongs to the RecA family. DMC1 subfamily. In terms of tissue distribution, expressed in meiotic young panicles.

The protein localises to the nucleus. Functionally, recombinase that may participate in meiotic recombination, specifically in homologous strand assimilation, which is required for the resolution of meiotic double-strand breaks. Exhibits DNA-dependent ATPase activity when bound to single-stranded DNA (ssDNA). Mediates renaturation of homologous complementary strands as well as assimilation of single strands into homologous supercoiled duplexes leading to D-loop formation. Binds circular single-stranded DNA (ssDNA) and circular double-stranded DNA (dsDNA) in vitro. Catalyzes DNA homologous renaturation and DNA strand exchange. The rates of these activities are dependent on the state of ATP hydrolysis. Forms helical filaments along ssDNA and dsDNA, and promotes strand exchange between ssDNA and dsDNA with long DNA substrates of several thousand base pairs. The presence of the replication protein A is not required for this activity. Seems to be required for homologous pairing and subsequent chromosome segregation during male meiosis. May be not directly required for homologous pairing during male meiosis. Required for synaptonemal complex assembly and crossover formation. Functions redundantly with DMC1B. The sequence is that of Meiotic recombination protein DMC1 homolog A from Oryza sativa subsp. japonica (Rice).